The following is a 345-amino-acid chain: Holliday junction branch migration complex subunit RuvB (345 aa).

A large ATPase domain (RuvB-L) region spans residues 1–186 (MSTDPDEREV…FGFTAHMDFY (186 aa)). ATP contacts are provided by residues L25, R26, G67, K70, T71, S72, 133-135 (EDF), R176, Y186, and R223. A Mg(2+)-binding site is contributed by T71. The small ATPAse domain (RuvB-S) stretch occupies residues 187–257 (EPAELERVLV…VAKAALAVYD (71 aa)). Residues 260–345 (ELGLDRLDRA…AGANQPGLFE (86 aa)) form a head domain (RuvB-H) region. Positions 315 and 320 each coordinate DNA.

Belongs to the RuvB family. In terms of assembly, homohexamer. Forms an RuvA(8)-RuvB(12)-Holliday junction (HJ) complex. HJ DNA is sandwiched between 2 RuvA tetramers; dsDNA enters through RuvA and exits via RuvB. An RuvB hexamer assembles on each DNA strand where it exits the tetramer. Each RuvB hexamer is contacted by two RuvA subunits (via domain III) on 2 adjacent RuvB subunits; this complex drives branch migration. In the full resolvosome a probable DNA-RuvA(4)-RuvB(12)-RuvC(2) complex forms which resolves the HJ.

The protein resides in the cytoplasm. The catalysed reaction is ATP + H2O = ADP + phosphate + H(+). In terms of biological role, the RuvA-RuvB-RuvC complex processes Holliday junction (HJ) DNA during genetic recombination and DNA repair, while the RuvA-RuvB complex plays an important role in the rescue of blocked DNA replication forks via replication fork reversal (RFR). RuvA specifically binds to HJ cruciform DNA, conferring on it an open structure. The RuvB hexamer acts as an ATP-dependent pump, pulling dsDNA into and through the RuvAB complex. RuvB forms 2 homohexamers on either side of HJ DNA bound by 1 or 2 RuvA tetramers; 4 subunits per hexamer contact DNA at a time. Coordinated motions by a converter formed by DNA-disengaged RuvB subunits stimulates ATP hydrolysis and nucleotide exchange. Immobilization of the converter enables RuvB to convert the ATP-contained energy into a lever motion, pulling 2 nucleotides of DNA out of the RuvA tetramer per ATP hydrolyzed, thus driving DNA branch migration. The RuvB motors rotate together with the DNA substrate, which together with the progressing nucleotide cycle form the mechanistic basis for DNA recombination by continuous HJ branch migration. Branch migration allows RuvC to scan DNA until it finds its consensus sequence, where it cleaves and resolves cruciform DNA. This is Holliday junction branch migration complex subunit RuvB from Mycobacterium marinum (strain ATCC BAA-535 / M).